The sequence spans 918 residues: Glutamate receptor ionotropic, kainate 1 (918 aa).

Positions 1 to 30 (MEHGTLLAQPGLWTRDTSWALLYFLCYILP) are cleaved as a signal peptide. The Extracellular portion of the chain corresponds to 31-576 (QTAPQVLRIG…VFSFLNPLSP (546 aa)). N-linked (GlcNAc...) asparagine glycans are attached at residues Asn-68, Asn-74, Asn-276, Asn-379, Asn-428, Asn-439, and Asn-446. L-glutamate contacts are provided by Pro-531, Thr-533, and Arg-538. Asn-561 is a glycosylation site (N-linked (GlcNAc...) asparagine). The chain crosses the membrane as a helical span at residues 577–597 (DIWMYVLLACLGVSCVLFVIA). Residues 598–653 (RFTPYEWYNPHPCNPDSDVVENNFTLLNSFWFGVGALMQQGSELMPKALSTRIVGG) lie on the Cytoplasmic side of the membrane. The helical transmembrane segment at 654–674 (IWWFFTLIIISSYTANLAAFL) threads the bilayer. Residues 675-834 (TVERMESPID…KEASALGVEN (160 aa)) are Extracellular-facing. 2 residues coordinate L-glutamate: Ser-704 and Thr-705. Ser-725 carries the phosphoserine; by PKC modification. Glu-753 contacts L-glutamate. A Phosphothreonine; by PKC modification is found at Thr-761. Cysteines 765 and 819 form a disulfide. Asn-766 is a glycosylation site (N-linked (GlcNAc...) asparagine). The helical transmembrane segment at 835–855 (IGGIFIVLAAGLVLSVFVAIG) threads the bilayer. Over 856-918 (EFIYKSRKNN…IRKQSSVHTV (63 aa)) the chain is Cytoplasmic.

It belongs to the glutamate-gated ion channel (TC 1.A.10.1) family. GRIK1 subfamily. As to quaternary structure, homotetramer or heterotetramer of pore-forming glutamate receptor subunits. Tetramers may be formed by the dimerization of dimers. Can form functional heteromeric receptors with GRIK5. Can form functional heteromeric receptors with GRIK4. Interacts with KLHL17.

Its subcellular location is the cell membrane. It localises to the postsynaptic cell membrane. The catalysed reaction is Ca(2+)(in) = Ca(2+)(out). In terms of biological role, ionotropic glutamate receptor that functions as a cation-permeable ligand-gated ion channel, gated by L-glutamate and the glutamatergic agonist kainic acid. L-glutamate acts as an excitatory neurotransmitter at many synapses in the central nervous system. Binding of the excitatory neurotransmitter L-glutamate induces a conformation change, leading to the opening of the cation channel, and thereby converts the chemical signal to an electrical impulse. The receptor then desensitizes rapidly and enters a transient inactive state, characterized by the presence of bound agonist. Its function is as follows. Ionotropic glutamate receptor that functions as a cation-permeable ligand-gated ion channel, gated by L-glutamate and the glutamatergic agonist kainic acid. This chain is Glutamate receptor ionotropic, kainate 1 (GRIK1), found in Homo sapiens (Human).